The primary structure comprises 547 residues: uncharacterized protein (547 aa).

Positions 1–18 are enriched in polar residues; that stretch reads MEYHPSSQSPQVNPGMES. Disordered stretches follow at residues 1–41 and 80–165; these read MEYH…LQHP and PSYP…VKRQ. Composition is skewed to low complexity over residues 19-29 and 83-94; these read QQGGYTYTYQQ and PQSSSAPSNNSY. Over residues 121–135 the composition is skewed to pro residues; sequence VPSPSPIEMVPPSPP. Polar residues predominate over residues 136 to 160; that stretch reads KTGSNNSAPVTGKTVQSGNALNNSG. Residues 174–201 constitute a DNA-binding region (zn(2)-C6 fungal-type); that stretch reads CLTCRKRRIKCDERKPICYNCIKSKRQC.

Its subcellular location is the nucleus. This is an uncharacterized protein from Schizosaccharomyces pombe (strain 972 / ATCC 24843) (Fission yeast).